The sequence spans 687 residues: Epithelial splicing regulatory protein 1 (687 aa).

RRM domains lie at 226–303 (TIIR…KATG), 327–407 (VIVR…RSTA), and 446–526 (DCIR…QCSA).

Belongs to the ESRP family.

The protein localises to the nucleus. Its function is as follows. mRNA splicing factor that regulates the formation of epithelial cell-specific isoforms. Specifically regulates the expression of FGFR2-IIIb, an epithelial cell-specific isoform of fgfr2. Acts by directly binding specific sequences in mRNAs. Binds the GU-rich sequence motifs in the ISE/ISS-3, a cis-element regulatory region present in the mRNA of fgfr2. The protein is Epithelial splicing regulatory protein 1 (esrp1) of Xenopus tropicalis (Western clawed frog).